The following is a 549-amino-acid chain: Glucose-6-phosphate isomerase (549 aa).

N6-acetyllysine is present on residues Lys-80, Lys-228, and Lys-234. Catalysis depends on Glu-355, which acts as the Proton donor. Catalysis depends on residues His-386 and Lys-514.

Belongs to the GPI family.

The protein resides in the cytoplasm. It catalyses the reaction alpha-D-glucose 6-phosphate = beta-D-fructose 6-phosphate. The protein operates within carbohydrate biosynthesis; gluconeogenesis. Its pathway is carbohydrate degradation; glycolysis; D-glyceraldehyde 3-phosphate and glycerone phosphate from D-glucose: step 2/4. In terms of biological role, catalyzes the reversible isomerization of glucose-6-phosphate to fructose-6-phosphate. This chain is Glucose-6-phosphate isomerase, found in Escherichia coli (strain SE11).